The chain runs to 164 residues: ATP synthase subunit b (164 aa).

A helical transmembrane segment spans residues 6-26; that stretch reads GELVGNFILVTGSVIVLLLLI.

The protein belongs to the ATPase B chain family. In terms of assembly, F-type ATPases have 2 components, F(1) - the catalytic core - and F(0) - the membrane proton channel. F(1) has five subunits: alpha(3), beta(3), gamma(1), delta(1), epsilon(1). F(0) has three main subunits: a(1), b(2) and c(10-14). The alpha and beta chains form an alternating ring which encloses part of the gamma chain. F(1) is attached to F(0) by a central stalk formed by the gamma and epsilon chains, while a peripheral stalk is formed by the delta and b chains.

Its subcellular location is the cell membrane. Its function is as follows. F(1)F(0) ATP synthase produces ATP from ADP in the presence of a proton or sodium gradient. F-type ATPases consist of two structural domains, F(1) containing the extramembraneous catalytic core and F(0) containing the membrane proton channel, linked together by a central stalk and a peripheral stalk. During catalysis, ATP synthesis in the catalytic domain of F(1) is coupled via a rotary mechanism of the central stalk subunits to proton translocation. Functionally, component of the F(0) channel, it forms part of the peripheral stalk, linking F(1) to F(0). This is ATP synthase subunit b from Streptococcus pyogenes serotype M6 (strain ATCC BAA-946 / MGAS10394).